The following is a 140-amino-acid chain: UPF0134 protein MPN_094 (140 aa).

Belongs to the UPF0134 family.

This chain is UPF0134 protein MPN_094, found in Mycoplasma pneumoniae (strain ATCC 29342 / M129 / Subtype 1) (Mycoplasmoides pneumoniae).